A 429-amino-acid chain; its full sequence is Phosphomethylpyrimidine synthase 1 (429 aa).

Substrate-binding positions include asparagine 65, methionine 94, tyrosine 123, histidine 162, 184–186 (SRG), 225–228 (DGLR), and glutamate 264. Residue histidine 268 participates in Zn(2+) binding. Tyrosine 291 provides a ligand contact to substrate. Histidine 332 provides a ligand contact to Zn(2+). 3 residues coordinate [4Fe-4S] cluster: cysteine 408, cysteine 411, and cysteine 415.

This sequence belongs to the ThiC family. [4Fe-4S] cluster is required as a cofactor.

The catalysed reaction is 5-amino-1-(5-phospho-beta-D-ribosyl)imidazole + S-adenosyl-L-methionine = 4-amino-2-methyl-5-(phosphooxymethyl)pyrimidine + CO + 5'-deoxyadenosine + formate + L-methionine + 3 H(+). It participates in cofactor biosynthesis; thiamine diphosphate biosynthesis. In terms of biological role, catalyzes the synthesis of the hydroxymethylpyrimidine phosphate (HMP-P) moiety of thiamine from aminoimidazole ribotide (AIR) in a radical S-adenosyl-L-methionine (SAM)-dependent reaction. This Methanosphaera stadtmanae (strain ATCC 43021 / DSM 3091 / JCM 11832 / MCB-3) protein is Phosphomethylpyrimidine synthase 1.